Consider the following 343-residue polypeptide: Protein RecA (343 aa).

Residue 66 to 73 (GPESSGKT) coordinates ATP.

This sequence belongs to the RecA family.

The protein localises to the cytoplasm. Can catalyze the hydrolysis of ATP in the presence of single-stranded DNA, the ATP-dependent uptake of single-stranded DNA by duplex DNA, and the ATP-dependent hybridization of homologous single-stranded DNAs. It interacts with LexA causing its activation and leading to its autocatalytic cleavage. This Rickettsia canadensis (strain McKiel) protein is Protein RecA.